Reading from the N-terminus, the 117-residue chain is Small ribosomal subunit protein uS17 (117 aa).

The protein belongs to the universal ribosomal protein uS17 family. As to quaternary structure, part of the 30S ribosomal subunit.

Its function is as follows. One of the primary rRNA binding proteins, it binds specifically to the 5'-end of 16S ribosomal RNA. The sequence is that of Small ribosomal subunit protein uS17 from Methanocaldococcus jannaschii (strain ATCC 43067 / DSM 2661 / JAL-1 / JCM 10045 / NBRC 100440) (Methanococcus jannaschii).